A 496-amino-acid chain; its full sequence is Transcription termination/antitermination protein NusA (496 aa).

An S1 motif domain is found at 135–200 (GQIITGIVKK…RGAQLFISRS (66 aa)). Residues 302–370 (CHTMDIAVDI…KNLNINENII (69 aa)) form the KH domain. Repeat copies occupy residues 364–414 (NINE…KSKL) and 440–490 (GMNA…RNIC). The 2 X 51 AA approximate repeats stretch occupies residues 364–490 (NINENIIKIL…LLIMTARNIC (127 aa)).

It belongs to the NusA family. As to quaternary structure, monomer. Binds directly to the core enzyme of the DNA-dependent RNA polymerase and to nascent RNA.

It is found in the cytoplasm. Its function is as follows. Participates in both transcription termination and antitermination. This Buchnera aphidicola subsp. Acyrthosiphon pisum (strain APS) (Acyrthosiphon pisum symbiotic bacterium) protein is Transcription termination/antitermination protein NusA.